Here is a 201-residue protein sequence, read N- to C-terminus: Imidazoleglycerol-phosphate dehydratase (201 aa).

Belongs to the imidazoleglycerol-phosphate dehydratase family.

The protein resides in the cytoplasm. The enzyme catalyses D-erythro-1-(imidazol-4-yl)glycerol 3-phosphate = 3-(imidazol-4-yl)-2-oxopropyl phosphate + H2O. It functions in the pathway amino-acid biosynthesis; L-histidine biosynthesis; L-histidine from 5-phospho-alpha-D-ribose 1-diphosphate: step 6/9. This Prochlorococcus marinus (strain AS9601) protein is Imidazoleglycerol-phosphate dehydratase.